Reading from the N-terminus, the 204-residue chain is uncharacterized protein (204 aa).

The segment at 118–169 is disordered; it reads FPAASERPMPSRRLSKATQNVQTRPSERPAPCHRRPGPRGPGGRDPPEACHP.

This is an uncharacterized protein from Encephalitozoon cuniculi (strain GB-M1) (Microsporidian parasite).